We begin with the raw amino-acid sequence, 608 residues long: Fatty acid amide hydrolase (608 aa).

Active-site charge relay system residues include lysine 206 and serine 282. 303–306 (GGGS) lines the substrate pocket. The active-site Acyl-ester intermediate is the serine 306.

Belongs to the amidase family. In terms of assembly, forms homodimers.

It is found in the endoplasmic reticulum membrane. It localises to the cell membrane. The catalysed reaction is N-(9Z,12Z-octadecadienoyl)-ethanolamine + H2O = ethanolamine + (9Z,12Z)-octadecadienoate. The enzyme catalyses N-hexadecanoylethanolamine + H2O = ethanolamine + hexadecanoate. It carries out the reaction N-dodecanoylethanolamine + H2O = dodecanoate + ethanolamine. Its activity is regulated as follows. Inhibited by methyl arachidonyl fluorophosphonate (MAFP). Functionally, catalyzes the hydrolysis of bioactive endogenous fatty acid amides to their corresponding acids. The hydrolysis of endogenous amidated lipids terminates their participation as lipid mediators in various signaling systems. Converts a wide range of N-acylethanolamines (NAEs) to their corresponding free fatty acids and ethanolamine. The sequence is that of Fatty acid amide hydrolase from Oryza sativa subsp. japonica (Rice).